A 245-amino-acid chain; its full sequence is Octopine transport system permease protein OccM (245 aa).

Transmembrane regions (helical) follow at residues 12-32, 57-77, 96-116, 163-183, and 204-224; these read FVAL…SVAL, FYIF…IYYG, AYWC…AEIM, ILMV…ITGI, and IYLI…WALW. In terms of domain architecture, ABC transmembrane type-1 spans 19 to 216; sequence IPLALQLAVF…ILNFIVARLF (198 aa).

Belongs to the binding-protein-dependent transport system permease family. HisMQ subfamily.

Its subcellular location is the cell inner membrane. Component of the octopine active transport system probably consisting of four subunits: Q, M, P and T. The polypeptide is Octopine transport system permease protein OccM (occM) (Rhizobium radiobacter (Agrobacterium tumefaciens)).